A 540-amino-acid polypeptide reads, in one-letter code: Chaperonin GroEL (540 aa).

ATP is bound by residues 29 to 32 (TIGP), 86 to 90 (DGTTT), Gly413, 477 to 479 (NAA), and Asp493.

Belongs to the chaperonin (HSP60) family. As to quaternary structure, forms a cylinder of 14 subunits composed of two heptameric rings stacked back-to-back. Interacts with the co-chaperonin GroES.

It is found in the cytoplasm. The enzyme catalyses ATP + H2O + a folded polypeptide = ADP + phosphate + an unfolded polypeptide.. Together with its co-chaperonin GroES, plays an essential role in assisting protein folding. The GroEL-GroES system forms a nano-cage that allows encapsulation of the non-native substrate proteins and provides a physical environment optimized to promote and accelerate protein folding. This chain is Chaperonin GroEL, found in Lactobacillus helveticus (strain DPC 4571).